Here is a 203-residue protein sequence, read N- to C-terminus: Dephospho-CoA kinase (203 aa).

The region spanning 6-203 (RLGITGGIAC…SLLGRGGKGG (198 aa)) is the DPCK domain. 14–19 (ACGKSV) serves as a coordination point for ATP.

Belongs to the CoaE family.

Its subcellular location is the cytoplasm. It carries out the reaction 3'-dephospho-CoA + ATP = ADP + CoA + H(+). The protein operates within cofactor biosynthesis; coenzyme A biosynthesis; CoA from (R)-pantothenate: step 5/5. Functionally, catalyzes the phosphorylation of the 3'-hydroxyl group of dephosphocoenzyme A to form coenzyme A. The protein is Dephospho-CoA kinase of Thermosynechococcus vestitus (strain NIES-2133 / IAM M-273 / BP-1).